Consider the following 238-residue polypeptide: Probable transcriptional regulatory protein CHU_3516 (238 aa).

The protein belongs to the TACO1 family.

It is found in the cytoplasm. This is Probable transcriptional regulatory protein CHU_3516 from Cytophaga hutchinsonii (strain ATCC 33406 / DSM 1761 / CIP 103989 / NBRC 15051 / NCIMB 9469 / D465).